Consider the following 214-residue polypeptide: Cytochrome b (214 aa).

The next 4 helical transmembrane spans lie at 31–51 (FGSM…FLAI), 75–96 (WIMQ…YIHI), 111–131 (WLSG…GYVL), and 176–196 (FFAL…IHIL). Heme b-binding residues include His-81 and His-95. Residues His-180 and His-194 each contribute to the heme b site. Residue His-199 coordinates a ubiquinone.

The protein belongs to the cytochrome b family. As to quaternary structure, the cytochrome bc1 complex contains 3 respiratory subunits (MT-CYB, CYC1 and UQCRFS1), 2 core proteins (UQCRC1 and UQCRC2) and probably 6 low-molecular weight proteins. Heme b serves as cofactor.

The protein localises to the mitochondrion inner membrane. Functionally, component of the ubiquinol-cytochrome c reductase complex (complex III or cytochrome b-c1 complex) that is part of the mitochondrial respiratory chain. The b-c1 complex mediates electron transfer from ubiquinol to cytochrome c. Contributes to the generation of a proton gradient across the mitochondrial membrane that is then used for ATP synthesis. This is Cytochrome b (MT-CYB) from Agkistrodon contortrix contortrix (Southern copperhead).